We begin with the raw amino-acid sequence, 478 residues long: Protein adenylyltransferase VbhT (478 aa).

Positions 55–200 (FDLDHMKKIH…RRNLTEFTVN (146 aa)) constitute a Fido domain. ATP contacts are provided by residues 85–88 (KDNS), 133–136 (NALH), 140–147 (EGNGRTLR), and Ser-175.

In terms of assembly, homodimer. Interacts with VbhA.

It catalyses the reaction L-tyrosyl-[protein] + ATP = O-(5'-adenylyl)-L-tyrosyl-[protein] + diphosphate. The enzyme catalyses L-threonyl-[protein] + ATP = 3-O-(5'-adenylyl)-L-threonyl-[protein] + diphosphate. Adenylyltransferase activity is inhibited by antitoxin VbhA; which acts by competing with ATP-binding at Arg-147 and prevents productive ATP-binding. Functionally, toxic component of type II toxin-antitoxin (TA) system VbhT-VbhA. Adenylyltransferase involved in virulence by mediating the addition of adenosine 5'-monophosphate (AMP) to specific residue of host GTPases. The resulting AMPylation affects GTPases, impairing actin assembly in infected cells. In Bartonella schoenbuchensis (strain DSM 13525 / NCTC 13165 / R1), this protein is Protein adenylyltransferase VbhT (vbhT).